A 435-amino-acid chain; its full sequence is Glutamyl-tRNA reductase (435 aa).

Residues 49 to 52, serine 109, 114 to 116, and glutamine 120 each bind substrate; these read TCNR and EGQ. Catalysis depends on cysteine 50, which acts as the Nucleophile. 198 to 203 contributes to the NADP(+) binding site; that stretch reads GAGRMS.

This sequence belongs to the glutamyl-tRNA reductase family. Homodimer.

The enzyme catalyses (S)-4-amino-5-oxopentanoate + tRNA(Glu) + NADP(+) = L-glutamyl-tRNA(Glu) + NADPH + H(+). It functions in the pathway porphyrin-containing compound metabolism; protoporphyrin-IX biosynthesis; 5-aminolevulinate from L-glutamyl-tRNA(Glu): step 1/2. It participates in porphyrin-containing compound metabolism; chlorophyll biosynthesis. Its function is as follows. Catalyzes the NADPH-dependent reduction of glutamyl-tRNA(Glu) to glutamate 1-semialdehyde (GSA). This Prochlorococcus marinus (strain MIT 9515) protein is Glutamyl-tRNA reductase.